The sequence spans 334 residues: GTP 3',8-cyclase (334 aa).

The Radical SAM core domain occupies 11–236; it reads GFNRKIDYLR…ESTESSQGPA (226 aa). R20 contributes to the GTP binding site. The [4Fe-4S] cluster site is built by C27 and C31. Position 33 (Y33) interacts with S-adenosyl-L-methionine. Residue C34 coordinates [4Fe-4S] cluster. R69 lines the GTP pocket. Residue G73 coordinates S-adenosyl-L-methionine. GTP is bound at residue T100. S124 contributes to the S-adenosyl-L-methionine binding site. Position 161 (K161) interacts with GTP. An S-adenosyl-L-methionine-binding site is contributed by M195. The [4Fe-4S] cluster site is built by C260 and C263. 265-267 lines the GTP pocket; sequence RVR. C277 is a [4Fe-4S] cluster binding site.

Belongs to the radical SAM superfamily. MoaA family. As to quaternary structure, monomer and homodimer. Requires [4Fe-4S] cluster as cofactor.

It carries out the reaction GTP + AH2 + S-adenosyl-L-methionine = (8S)-3',8-cyclo-7,8-dihydroguanosine 5'-triphosphate + 5'-deoxyadenosine + L-methionine + A + H(+). The protein operates within cofactor biosynthesis; molybdopterin biosynthesis. Catalyzes the cyclization of GTP to (8S)-3',8-cyclo-7,8-dihydroguanosine 5'-triphosphate. This chain is GTP 3',8-cyclase, found in Pseudomonas putida (strain W619).